Consider the following 417-residue polypeptide: Phosphoglycerate kinase (417 aa).

Residues Asp-24–Asn-26, Arg-44, His-67–Arg-70, Arg-126, and Arg-170 contribute to the substrate site. Residues Lys-220, Gly-316, Glu-347, and Gly-373–Ser-376 contribute to the ATP site.

The protein belongs to the phosphoglycerate kinase family. In terms of assembly, monomer.

Its subcellular location is the cytoplasm. It carries out the reaction (2R)-3-phosphoglycerate + ATP = (2R)-3-phospho-glyceroyl phosphate + ADP. The protein operates within carbohydrate degradation; glycolysis; pyruvate from D-glyceraldehyde 3-phosphate: step 2/5. This Renibacterium salmoninarum (strain ATCC 33209 / DSM 20767 / JCM 11484 / NBRC 15589 / NCIMB 2235) protein is Phosphoglycerate kinase.